The primary structure comprises 443 residues: Exodeoxyribonuclease 7 large subunit (443 aa).

This sequence belongs to the XseA family. Heterooligomer composed of large and small subunits.

It is found in the cytoplasm. The enzyme catalyses Exonucleolytic cleavage in either 5'- to 3'- or 3'- to 5'-direction to yield nucleoside 5'-phosphates.. Its function is as follows. Bidirectionally degrades single-stranded DNA into large acid-insoluble oligonucleotides, which are then degraded further into small acid-soluble oligonucleotides. The polypeptide is Exodeoxyribonuclease 7 large subunit (Stenotrophomonas maltophilia (strain R551-3)).